A 253-amino-acid polypeptide reads, in one-letter code: Testis-expressed protein 47 (253 aa).

In terms of tissue distribution, testis-specific.

The sequence is that of Testis-expressed protein 47 from Homo sapiens (Human).